The primary structure comprises 695 residues: Elongation factor G (695 aa).

The tr-type G domain maps to 8-282 (EKTRNIGIMA…AVLDYLPAPT (275 aa)). Residues 17–24 (AHIDAGKT), 81–85 (DTPGH), and 135–138 (NKMD) contribute to the GTP site.

Belongs to the TRAFAC class translation factor GTPase superfamily. Classic translation factor GTPase family. EF-G/EF-2 subfamily.

It localises to the cytoplasm. Catalyzes the GTP-dependent ribosomal translocation step during translation elongation. During this step, the ribosome changes from the pre-translocational (PRE) to the post-translocational (POST) state as the newly formed A-site-bound peptidyl-tRNA and P-site-bound deacylated tRNA move to the P and E sites, respectively. Catalyzes the coordinated movement of the two tRNA molecules, the mRNA and conformational changes in the ribosome. In Listeria monocytogenes serotype 4b (strain CLIP80459), this protein is Elongation factor G.